Reading from the N-terminus, the 609-residue chain is MALPQLSEGAISAMLGGDSSCKPTLQVINIRPINTGNGPPRYRLLMSDGLNTLSSFMLATQLNSLVDNNLLATNCICQVSRFIVNNLKDGRRVIIVMELDVLKSADLVMGKIGNPQPYNDGQPQPAAPAPASAPAPAPSKLQNNSAPPPSMNRGTSKLFGGGSLLNTPGGSQSKVVPIASLNPYQSKWTVRARVTNKGQIRTWSNSRGEGKLFSIEMVDESGEIRATAFNEQADKFFSIIEVNKVYYFSKGTLKIANKQYTSVKNDYEMTFNSETSVIPCDDSADVPMVQFEFVSIGELESKNKDTVLDIIGVCKNVEEVTKVTIKSNNREVSKRSIHLMDSSGKVVSTTLWGEDADKFDGSRQPVVAIKGARLSDFGGRSLSVLSSSTVMINPDIPEAFKLRAWFDSEGQVVEGTSISESRGGGTGGGNTNWKSLLEVKNENLGHGEKADYFTSVATIVYLRKENCLYQACPSQDCNKKVIDQQNGLFRCEKCNKEFPNFKYRLILSANIADFGENQWITCFQESAESILGQNATYLGELKEKNEQAYDEVFQNANFRSYTFRARVKLETYNDESRIKATAVDVKPVDHKEYSRRLIMNIRKMATQGV.

The tract at residues 113-163 (GNPQPYNDGQPQPAAPAPASAPAPAPSKLQNNSAPPPSMNRGTSKLFGGGS) is disordered. Residues 125-137 (PAAPAPASAPAPA) are compositionally biased toward pro residues. Positions 188 to 272 (WTVRARVTNK…VKNDYEMTFN (85 aa)) form a DNA-binding region, OB. The C4-type zinc finger occupies 472–494 (CPSQDCNKKVIDQQNGLFRCEKC).

It belongs to the replication factor A protein 1 family. Component of the heterotrimeric canonical replication protein A complex (RPA). Interacts with rpain-a.

The protein localises to the nucleus. It localises to the PML body. Functionally, as part of the heterotrimeric replication protein A complex (RPA/RP-A), binds and stabilizes single-stranded DNA intermediates, that form during DNA replication or upon DNA stress. It prevents their reannealing and in parallel, recruits and activates different proteins and complexes involved in DNA metabolism. Thereby, it plays an essential role both in DNA replication and the cellular response to DNA damage. The chain is Replication protein A 70 kDa DNA-binding subunit (rpa1) from Xenopus laevis (African clawed frog).